Here is a 91-residue protein sequence, read N- to C-terminus: Dynein 8 kDa light chain, flagellar outer arm (91 aa).

This sequence belongs to the dynein light chain family. In terms of assembly, consists of at least 3 heavy chains (alpha, beta and gamma), 2 intermediate chains and 8 light chains.

It is found in the cytoplasm. The protein localises to the cytoskeleton. Its subcellular location is the flagellum axoneme. The protein is Dynein 8 kDa light chain, flagellar outer arm of Chlamydomonas reinhardtii (Chlamydomonas smithii).